Reading from the N-terminus, the 166-residue chain is Regulatory protein RecX (166 aa).

This sequence belongs to the RecX family.

It localises to the cytoplasm. Modulates RecA activity. This Escherichia coli (strain K12 / MC4100 / BW2952) protein is Regulatory protein RecX.